The sequence spans 86 residues: Muscarinic toxin MTX6 (86 aa).

Positions 1–21 are cleaved as a signal peptide; that stretch reads MKTLLLTLVVVTILCLDLGYT. 4 cysteine pairs are disulfide-bonded: Cys-24/Cys-45, Cys-38/Cys-63, Cys-67/Cys-78, and Cys-79/Cys-84.

Belongs to the three-finger toxin family. Short-chain subfamily. Aminergic toxin sub-subfamily. As to quaternary structure, monomer. As to expression, expressed by the venom gland.

Its subcellular location is the secreted. Its function is as follows. Binds to the muscarinic acetylcholine receptor (CHRM). The protein is Muscarinic toxin MTX6 of Ophiophagus hannah (King cobra).